We begin with the raw amino-acid sequence, 417 residues long: Neuropeptide FF receptor 2 (417 aa).

Residues 1–45 (MGKRWDSNSSGSWDHIWSGNDTQHPWYSDINITYMNYYLHQPHVT) lie on the Extracellular side of the membrane. N-linked (GlcNAc...) asparagine glycans are attached at residues Asn8, Asn20, and Asn31. A helical membrane pass occupies residues 46–66 (AVFISSYFLIFFLCMVGNTVV). The Cytoplasmic portion of the chain corresponds to 67–82 (CFVVIRNRYMHTVTNF). The helical transmembrane segment at 83-103 (FIFNLAISDLLVGIFCMPITL) threads the bilayer. Residues 104 to 119 (LDNIIAGWPFGSSMCK) are Extracellular-facing. A disulfide bridge connects residues Cys118 and Cys206. Residues 120–140 (ISGLVQGISVAASVFTLVAIA) traverse the membrane as a helical segment. The Cytoplasmic portion of the chain corresponds to 141 to 160 (VDRFRCVVYPFKPKLTVKTA). The helical transmembrane segment at 161–181 (FVMIVIIWGLAITIMTPSAIM) threads the bilayer. Over 182 to 217 (LHVQEEKYYRVRLSSHNKTSTVYWCREDWPNQEMRR) the chain is Extracellular. A glycan (N-linked (GlcNAc...) asparagine) is linked at Asn198. Residues 218 to 238 (IYTTVLFATIYLAPLSLIVIM) form a helical membrane-spanning segment. At 239–274 (YARIGASLFKTSAHSTGKQRLEQWHVSKKKQKVIKM) the chain is on the cytoplasmic side. The chain crosses the membrane as a helical span at residues 275–295 (LLTVALLFILSWLPLWTLMML). Topologically, residues 296-310 (SDYADLSPNKLRVIN) are extracellular. Residues 311–331 (IYVYPFAHWLAFCNSSVNPII) traverse the membrane as a helical segment. The Cytoplasmic portion of the chain corresponds to 332-417 (YGFFNENFRS…TGEATNSTET (86 aa)). Positions 378–417 (HEPASQNPSGENLGCRKSADNPTQESLMEETGEATNSTET) are disordered.

It belongs to the G-protein coupled receptor 1 family.

The protein resides in the cell membrane. In terms of biological role, receptor for NPAF (A-18-F-amide) and NPFF (F-8-F-amide) neuropeptides, also known as morphine-modulating peptides. Can also be activated by a variety of naturally occurring or synthetic FMRF-amide like ligands. This receptor mediates its action by association with G proteins that activate a phosphatidylinositol-calcium second messenger system. The chain is Neuropeptide FF receptor 2 (Npffr2) from Rattus norvegicus (Rat).